Reading from the N-terminus, the 82-residue chain is RNA-binding protein Hfq (82 aa).

Residues 11-72 enclose the Sm domain; sequence DTFLNAVRKS…ISTIAPSAPV (62 aa).

The protein belongs to the Hfq family. In terms of assembly, homohexamer.

In terms of biological role, RNA chaperone that binds small regulatory RNA (sRNAs) and mRNAs to facilitate mRNA translational regulation in response to envelope stress, environmental stress and changes in metabolite concentrations. Also binds with high specificity to tRNAs. In Hyphomonas neptunium (strain ATCC 15444), this protein is RNA-binding protein Hfq.